Consider the following 132-residue polypeptide: Small ribosomal subunit protein uS8 (132 aa).

This sequence belongs to the universal ribosomal protein uS8 family. Part of the 30S ribosomal subunit. Contacts proteins S5 and S12.

Functionally, one of the primary rRNA binding proteins, it binds directly to 16S rRNA central domain where it helps coordinate assembly of the platform of the 30S subunit. In Limosilactobacillus fermentum (strain NBRC 3956 / LMG 18251) (Lactobacillus fermentum), this protein is Small ribosomal subunit protein uS8.